Here is a 499-residue protein sequence, read N- to C-terminus: Cytochrome P450 monooxygenase notH' (499 aa).

A helical transmembrane segment spans residues leucine 11–phenylalanine 31. 2 N-linked (GlcNAc...) asparagine glycosylation sites follow: asparagine 296 and asparagine 427. Cysteine 440 contributes to the heme binding site.

It belongs to the cytochrome P450 family. Requires heme as cofactor.

It is found in the membrane. It participates in alkaloid biosynthesis. Cytochrome P450 monooxygenase; part of the gene cluster that mediates the biosynthesis of notoamide, a fungal indole alkaloid that belongs to a family of natural products containing a characteristic bicyclo[2.2.2]diazaoctane core. The first step of notoamide biosynthesis involves coupling of L-proline and L-tryptophan by the bimodular NRPS notE', to produce cyclo-L-tryptophan-L-proline called brevianamide F. The reverse prenyltransferase notF' then acts as a deoxybrevianamide E synthase and converts brevianamide F to deoxybrevianamide E via reverse prenylation at C-2 of the indole ring leading to the bicyclo[2.2.2]diazaoctane core. Deoxybrevianamide E is further hydroxylated at C-6 of the indole ring, likely catalyzed by the cytochrome P450 monooxygenase notG', to yield 6-hydroxy-deoxybrevianamide E. 6-hydroxy-deoxybrevianamide E is a specific substrate of the prenyltransferase notC' for normal prenylation at C-7 to produce 6-hydroxy-7-prenyl-deoxybrevianamide, also called notoamide S. As the proposed pivotal branching point in notoamide biosynthesis, notoamide S can be diverted to notoamide E through an oxidative pyran ring closure putatively catalyzed by either notH' cytochrome P450 monooxygenase or the notD' FAD-linked oxidoreductase. This step would be followed by an indole 2,3-epoxidation-initiated pinacol-like rearrangement catalyzed by the notB' FAD-dependent monooxygenase leading to the formation of notoamide C and notoamide D. On the other hand notoamide S is converted to notoamide T by notH' (or notD'), a bifunctional oxidase that also functions as the intramolecular Diels-Alderase responsible for generation of (-)-notoamide T. To generate antipodal (+)-notoaminide T, notH (or notD) in Aspergillus strain MF297-2 is expected to catalyze a Diels-Alder reaction leading to the opposite stereochemistry. The remaining oxidoreductase notD' (or notH') likely catalyzes the oxidative pyran ring formation to yield (-)-stephacidin A. The FAD-dependent monooxygenase notI' is highly similar to notB' and is predicted to catalyze a similar conversion from (-)-stephacidin A to (+)-notoamide B via the 2,3-epoxidation of (-)-stephacidin A followed by a pinacol-type rearrangement. Finally, it remains unclear which enzyme could be responsible for the final hydroxylation steps leading to notoamide A and sclerotiamide. The polypeptide is Cytochrome P450 monooxygenase notH' (Aspergillus versicolor).